The chain runs to 308 residues: uncharacterized protein (308 aa).

This is an uncharacterized protein from Bacillus subtilis (strain 168).